A 954-amino-acid chain; its full sequence is MTQNFEMADRFTPSAVEQALYKHWEESGYFKPSEDTSKPSYSIAIPPPNVTGSLHMGHAFQQTLMDILIRFNRMEGHNTLWQTGTDHAGIATQMVVERKIAAEEGKTRHDYGREAFIDKIWDWKAYSGGTISQQMRRLGNSIDWERERFTMDEGLSDAVKEVFVRLHEEGLIYRGKRLVNWDPKLHTAISDLEVENKESKGSLWHFRYPLANGAKTADGKDYLVVATTRPETMLGDTAVAVHPEDERYQSLIGKTVVLPLANREIPIIADDYVDREFGTGVVKITPAHDFNDYEVGKRHQLPMVNVMTLNADIRAEAEIIGSDGKILESYTALIPTKYQGMERFAARKQIVADFEELGLLDEIKPHDLKVPYGDRGGVPIEPMLTDQWYVSVKPLAEVAVKAVEDGEIQFVPKQYENLYFSWMRDIQDWCISRQLWWGHRIPAWYDEQGNVYVARDEAEVRAKHNLPADLALKQDEDVLDTWFSSGLWTFSTLGWPKQTPDLKMFHSTDVLITGFDIIFFWVARMIMFTMHFVKDENGKPQVPFKTVYVTGLIRDEQGQKMSKSKGNVIDPLDMIDGIDLESLLEKRTGNMMQPQLAEKIAKATIKAFPEGIAEHGTDALRFTLTALATNGRDINWDMKRLEGYRNFCNKLWNASRFVLTNDKLDLSEGSVEYSVADRWIQSEFNRTVEAFRNALAQFRFDLCATALYEFTWNQFCDWYLELTKPVLVNGSVAQKRGASQTLINVLEKLLRLTHPVMPFITEEIWHKVKAFAGVSGDTIMLQAFPQFEQSALDYQAEAEINWMKEVIVAVRNIRAESNIPPSKGLDLLLRNLSEADQNALENNRTLIQAMAKLDAIRVLEAGEDAPLSVAKLVNNAELLVPMAGFINKEAELARLNKEIEKYQGEIQRIENKLANEAFVAKAPPAVIEKERAKMAEYAEGLNKLKQQYLAIEAL.

The 'HIGH' region motif lies at 48-58 (PNVTGSLHMGH). The 'KMSKS' region signature appears at 560–564 (KMSKS). Lys-563 lines the ATP pocket. A coiled-coil region spans residues 883-953 (AGFINKEAEL…LKQQYLAIEA (71 aa)).

This sequence belongs to the class-I aminoacyl-tRNA synthetase family. ValS type 1 subfamily. Monomer.

It is found in the cytoplasm. The catalysed reaction is tRNA(Val) + L-valine + ATP = L-valyl-tRNA(Val) + AMP + diphosphate. Catalyzes the attachment of valine to tRNA(Val). As ValRS can inadvertently accommodate and process structurally similar amino acids such as threonine, to avoid such errors, it has a 'posttransfer' editing activity that hydrolyzes mischarged Thr-tRNA(Val) in a tRNA-dependent manner. This chain is Valine--tRNA ligase, found in Pasteurella multocida (strain Pm70).